We begin with the raw amino-acid sequence, 173 residues long: Alpha-crystallin A chain (173 aa).

Position 1 is an N-acetylmethionine (Met-1). The interval 1 to 63 (MDIAIQHPWF…RTVLDSGISE (63 aa)) is required for complex formation with BFSP1 and BFSP2. Gln-6 carries the deamidated glutamine; partial modification. The residue at position 45 (Ser-45) is a Phosphoserine. Gln-50 is modified (deamidated glutamine; partial). A sHSP domain is found at 52–162 (LFRTVLDSGI…GHSERAIPVS (111 aa)). An N6-acetyllysine modification is found at Lys-70. A Deamidated glutamine; partial modification is found at Gln-90. Lys-99 is subject to N6-acetyllysine. His-100 provides a ligand contact to Zn(2+). Position 101 is a deamidated asparagine; partial (Asn-101). Residues Glu-102 and His-107 each contribute to the Zn(2+) site. Ser-122 carries the post-translational modification Phosphoserine. At Asn-123 the chain carries Deamidated asparagine; partial. The interval 144-173 (PKVPSGVDAGHSERAIPVSREEKPSSAPSS) is disordered. Residues 153–167 (GHSERAIPVSREEKP) show a composition bias toward basic and acidic residues. Residue His-154 coordinates Zn(2+). An O-linked (GlcNAc) serine glycan is attached at Ser-162.

This sequence belongs to the small heat shock protein (HSP20) family. In terms of assembly, heteromer composed of three CRYAA and one CRYAB subunits. Inter-subunit bridging via zinc ions enhances stability, which is crucial as there is no protein turn over in the lens. Can also form homodimers and homotetramers (dimers of dimers) which serve as the building blocks of homooligomers. Within homooligomers, the zinc-binding motif is created from residues of 3 different molecules. His-100 and Glu-102 from one molecule are ligands of the zinc ion, and His-107 and His-154 residues from additional molecules complete the site with tetrahedral coordination geometry. Part of a complex required for lens intermediate filament formation composed of BFSP1, BFSP2 and CRYAA. In terms of processing, acetylation at Lys-70 may increase chaperone activity. Undergoes age-dependent proteolytical cleavage at the C-terminus.

It is found in the cytoplasm. The protein localises to the nucleus. Its function is as follows. Contributes to the transparency and refractive index of the lens. Acts as a chaperone, preventing aggregation of various proteins under a wide range of stress conditions. Required for the correct formation of lens intermediate filaments as part of a complex composed of BFSP1, BFSP2 and CRYAA. This Ovis aries (Sheep) protein is Alpha-crystallin A chain (CRYAA).